The following is a 1197-amino-acid chain: Sensor protein EvgS (1197 aa).

Residues 1–21 (MKFLPYIFLLCCGLWSTISFA) form the signal peptide. Residues 22-325 (DEDYIEYRGI…SMTDENGSVR (304 aa)) lie on the Cytoplasmic side of the membrane. A helical membrane pass occupies residues 326–346 (GVMGDILNIITLQTGLNFSPI). Topologically, residues 347-537 (TVSHNIHAGT…TWDLYSEQFY (191 aa)) are periplasmic. Residues 538-558 (IVTTLSVLLVGSSLLWGFYLL) traverse the membrane as a helical segment. At 559–1197 (RSVRRRKVIQ…EIAVFCQQNN (639 aa)) the chain is on the cytoplasmic side. The Histidine kinase domain maps to 718 to 938 (TMSHEIRTPI…TFTITIPVEI (221 aa)). Phosphohistidine; by autocatalysis is present on His721. Residues 960-1074 (SILIADDHPT…VLKTHLSQLH (115 aa)) enclose the Response regulatory domain. The residue at position 1009 (Asp1009) is a 4-aspartylphosphate. The region spanning 1098 to 1197 (DLQLMQEILM…EIAVFCQQNN (100 aa)) is the HPt domain. Position 1137 is a phosphohistidine (His1137).

Activation requires a sequential transfer of a phosphate group from a His in the primary transmitter domain, to an Asp in the receiver domain and to a His in the secondary transmitter domain.

It localises to the cell inner membrane. It catalyses the reaction ATP + protein L-histidine = ADP + protein N-phospho-L-histidine.. Functionally, member of the two-component regulatory system EvgS/EvgA. Phosphorylates EvgA via a four-step phosphorelay in response to environmental signals. The polypeptide is Sensor protein EvgS (evgS) (Escherichia coli O157:H7).